The chain runs to 205 residues: Guanylate kinase (205 aa).

One can recognise a Guanylate kinase-like domain in the interval 18-196 (PKLFIISAPA…AYQVLRSIFI (179 aa)). 25–32 (APAGAGKT) lines the ATP pocket.

Belongs to the guanylate kinase family.

It is found in the cytoplasm. The catalysed reaction is GMP + ATP = GDP + ADP. Functionally, essential for recycling GMP and indirectly, cGMP. The sequence is that of Guanylate kinase (gmk) from Chlamydia trachomatis serovar D (strain ATCC VR-885 / DSM 19411 / UW-3/Cx).